The chain runs to 703 residues: WPP domain-interacting tail-anchored protein 1 (703 aa).

The segment covering 1–12 has biased composition (basic and acidic residues); the sequence is METETEHDRTVS. Disordered regions lie at residues 1-27 and 86-107; these read METE…SSTK and FVSK…DDDS. Residues 92 to 107 are compositionally biased toward acidic residues; the sequence is EDEEEPSSNVDDDDDS. A coiled-coil region spans residues 118–183; it reads SSILNSEVKE…MEQVVEMKKQ (66 aa). The disordered stretch occupies residues 189–208; it reads RLSSGLDEQGSWSGGQTSVS. Residues 198–208 are compositionally biased toward polar residues; the sequence is GSWSGGQTSVS. Coiled coils occupy residues 236–265, 318–461, and 500–604; these read LEKS…MKLY, KRED…RDKG, and STVS…SREN. Residues 679–699 form a helical membrane-spanning segment; it reads FKHILVAILVILISSIAYVIS.

In terms of assembly, homodimer. Component of Ran complexes at least composed of WIT1 or WIT2, RANGAP1 or RANGAP2, and WIP1 or WIP2 or WIP3. Interacts with WIP2, WPP1/MAF1, WPP2/MAF2, RANGAP1 and RANGAP2. Component of a ternary complex composed of WPP1, HSP70-1 and WIT1. Interacts with KAKU1. Interacts with WIP1. As to expression, ubiquitous.

It is found in the nucleus envelope. The protein localises to the nucleus membrane. In terms of biological role, together with WIT2, required for the nuclear envelope docking of RANGAP proteins in root tips. This is WPP domain-interacting tail-anchored protein 1 (WIT1) from Arabidopsis thaliana (Mouse-ear cress).